The following is a 113-amino-acid chain: Large ribosomal subunit protein uL22 (113 aa).

The protein belongs to the universal ribosomal protein uL22 family. In terms of assembly, part of the 50S ribosomal subunit.

This protein binds specifically to 23S rRNA; its binding is stimulated by other ribosomal proteins, e.g. L4, L17, and L20. It is important during the early stages of 50S assembly. It makes multiple contacts with different domains of the 23S rRNA in the assembled 50S subunit and ribosome. Its function is as follows. The globular domain of the protein is located near the polypeptide exit tunnel on the outside of the subunit, while an extended beta-hairpin is found that lines the wall of the exit tunnel in the center of the 70S ribosome. In Bacillus mycoides (strain KBAB4) (Bacillus weihenstephanensis), this protein is Large ribosomal subunit protein uL22.